The chain runs to 63 residues: Bowman-Birk type proteinase inhibitor (63 aa).

7 disulfides stabilise this stretch: Cys8–Cys61, Cys9–Cys24, Cys12–Cys57, Cys14–Cys22, Cys31–Cys38, Cys35–Cys50, and Cys40–Cys48.

Belongs to the Bowman-Birk serine protease inhibitor family.

This inhibitor has two domains, each with separate antiprotease activity. Inhibits bovine trypsin and chymotrypsin, in a molar ratio of 1:1. The trypsin inhibition of FBI is independent of chymotrypsin inhibition, but the chymotrypsin inhibition is not completely independent of trypsin inhibition. The sequence is that of Bowman-Birk type proteinase inhibitor from Vicia faba (Broad bean).